Consider the following 382-residue polypeptide: UDP-4-amino-4-deoxy-L-arabinose--oxoglutarate aminotransferase (382 aa).

Lysine 182 carries the post-translational modification N6-(pyridoxal phosphate)lysine.

This sequence belongs to the DegT/DnrJ/EryC1 family. ArnB subfamily. In terms of assembly, homodimer. It depends on pyridoxal 5'-phosphate as a cofactor.

It catalyses the reaction UDP-4-amino-4-deoxy-beta-L-arabinose + 2-oxoglutarate = UDP-beta-L-threo-pentopyranos-4-ulose + L-glutamate. It functions in the pathway nucleotide-sugar biosynthesis; UDP-4-deoxy-4-formamido-beta-L-arabinose biosynthesis; UDP-4-deoxy-4-formamido-beta-L-arabinose from UDP-alpha-D-glucuronate: step 2/3. Its pathway is bacterial outer membrane biogenesis; lipopolysaccharide biosynthesis. Its function is as follows. Catalyzes the conversion of UDP-4-keto-arabinose (UDP-Ara4O) to UDP-4-amino-4-deoxy-L-arabinose (UDP-L-Ara4N). The modified arabinose is attached to lipid A and is required for resistance to polymyxin and cationic antimicrobial peptides. The chain is UDP-4-amino-4-deoxy-L-arabinose--oxoglutarate aminotransferase from Pectobacterium atrosepticum (strain SCRI 1043 / ATCC BAA-672) (Erwinia carotovora subsp. atroseptica).